The primary structure comprises 279 residues: UTP--glucose-1-phosphate uridylyltransferase (279 aa).

The protein belongs to the UDPGP type 2 family.

It carries out the reaction alpha-D-glucose 1-phosphate + UTP + H(+) = UDP-alpha-D-glucose + diphosphate. Its function is as follows. May play a role in stationary phase survival. This Pseudomonas aeruginosa protein is UTP--glucose-1-phosphate uridylyltransferase (galU).